Here is a 1679-residue protein sequence, read N- to C-terminus: Furin-like protease 2 (1679 aa).

Residues methionine 1–valine 10 are compositionally biased toward polar residues. Residues methionine 1 to serine 42 are disordered. N-linked (GlcNAc...) asparagine glycans are attached at residues asparagine 3, asparagine 109, and asparagine 130. Residues valine 139–aspartate 164 are disordered. The span at arginine 147 to asparagine 160 shows a compositional bias: low complexity. Asparagine 205 is a glycosylation site (N-linked (GlcNAc...) asparagine). One can recognise a Peptidase S8 domain in the interval glutamine 383–valine 705. The active-site Charge relay system is the aspartate 417. The disordered stretch occupies residues histidine 424–histidine 456. A compositionally biased stretch (polar residues) spans isoleucine 439 to asparagine 451. N-linked (GlcNAc...) asparagine glycosylation is present at asparagine 442. The Charge relay system role is filled by histidine 456. Cystine bridges form between cysteine 473–cysteine 629 and cysteine 565–cysteine 595. Residue asparagine 480 is glycosylated (N-linked (GlcNAc...) asparagine). The active-site Charge relay system is the serine 637. Positions valine 714–glutamine 852 constitute a P/Homo B domain. Cysteine 720 and cysteine 748 are disulfide-bonded. Asparagine 927 is a glycosylation site (N-linked (GlcNAc...) asparagine). FU repeat units follow at residues lysine 961–proline 1006, valine 1009–glutamate 1056, asparagine 1060–glutamate 1104, aspartate 1107–alanine 1152, arginine 1156–tyrosine 1204, glutamate 1208–valine 1253, glycine 1256–serine 1299, arginine 1301–lysine 1346, aspartate 1348–aspartate 1393, and serine 1396–alanine 1443. Asparagine 1060 carries an N-linked (GlcNAc...) asparagine glycan. Residue asparagine 1181 is glycosylated (N-linked (GlcNAc...) asparagine). N-linked (GlcNAc...) asparagine glycans are attached at residues asparagine 1274 and asparagine 1277. Asparagine 1439 carries N-linked (GlcNAc...) asparagine glycosylation. The helical transmembrane segment at alanine 1512–leucine 1532 threads the bilayer. The Cytoplasmic segment spans residues glutamine 1533–serine 1679. Positions threonine 1660–serine 1679 are disordered. Residues proline 1668–serine 1679 show a composition bias toward polar residues.

The protein belongs to the peptidase S8 family. Furin subfamily. Requires Ca(2+) as cofactor. Transient expression in a subset of central nervous system neurons during embryonic stages 12-13. Expression in developing tracheal tree from stage 13 to end of embryonic development.

The protein localises to the membrane. The enzyme catalyses Release of mature proteins from their proproteins by cleavage of -Arg-Xaa-Yaa-Arg-|-Zaa- bonds, where Xaa can be any amino acid and Yaa is Arg or Lys. Releases albumin, complement component C3 and von Willebrand factor from their respective precursors.. In terms of biological role, furin is likely to represent the ubiquitous endoprotease activity within constitutive secretory pathways and capable of cleavage at the RX(K/R)R consensus motif. This is Furin-like protease 2 (Fur2) from Drosophila melanogaster (Fruit fly).